A 407-amino-acid polypeptide reads, in one-letter code: Imidazolonepropionase (407 aa).

Residues H74 and H76 each contribute to the Fe(3+) site. Residues H74 and H76 each contribute to the Zn(2+) site. The 4-imidazolone-5-propanoate site is built by R83, Y146, and H179. Y146 contributes to the N-formimidoyl-L-glutamate binding site. H244 provides a ligand contact to Fe(3+). H244 contacts Zn(2+). Q247 contributes to the 4-imidazolone-5-propanoate binding site. D319 provides a ligand contact to Fe(3+). D319 contributes to the Zn(2+) binding site. N-formimidoyl-L-glutamate is bound by residues N321 and G323. Residue T324 participates in 4-imidazolone-5-propanoate binding.

This sequence belongs to the metallo-dependent hydrolases superfamily. HutI family. Zn(2+) is required as a cofactor. The cofactor is Fe(3+).

It localises to the cytoplasm. It catalyses the reaction 4-imidazolone-5-propanoate + H2O = N-formimidoyl-L-glutamate. It participates in amino-acid degradation; L-histidine degradation into L-glutamate; N-formimidoyl-L-glutamate from L-histidine: step 3/3. Its function is as follows. Catalyzes the hydrolytic cleavage of the carbon-nitrogen bond in imidazolone-5-propanoate to yield N-formimidoyl-L-glutamate. It is the third step in the universal histidine degradation pathway. The sequence is that of Imidazolonepropionase from Salmonella arizonae (strain ATCC BAA-731 / CDC346-86 / RSK2980).